A 327-amino-acid chain; its full sequence is GMP reductase (327 aa).

Cys-175 (thioimidate intermediate) is an active-site residue. 204-227 is an NADP(+) binding site; the sequence is IIADGGIRTHGDIAKSIRFGASMV.

It belongs to the IMPDH/GMPR family. GuaC type 2 subfamily.

It carries out the reaction IMP + NH4(+) + NADP(+) = GMP + NADPH + 2 H(+). Its function is as follows. Catalyzes the irreversible NADPH-dependent deamination of GMP to IMP. It functions in the conversion of nucleobase, nucleoside and nucleotide derivatives of G to A nucleotides, and in maintaining the intracellular balance of A and G nucleotides. This Oceanobacillus iheyensis (strain DSM 14371 / CIP 107618 / JCM 11309 / KCTC 3954 / HTE831) protein is GMP reductase.